A 1388-amino-acid chain; its full sequence is DNA-directed RNA polymerase subunit beta' (1388 aa).

Residues C76, C78, C91, and C94 each coordinate Zn(2+). Positions 467, 469, and 471 each coordinate Mg(2+). Positions 810, 884, 891, and 894 each coordinate Zn(2+).

The protein belongs to the RNA polymerase beta' chain family. In terms of assembly, the RNAP catalytic core consists of 2 alpha, 1 beta, 1 beta' and 1 omega subunit. When a sigma factor is associated with the core the holoenzyme is formed, which can initiate transcription. Mg(2+) is required as a cofactor. It depends on Zn(2+) as a cofactor.

It catalyses the reaction RNA(n) + a ribonucleoside 5'-triphosphate = RNA(n+1) + diphosphate. Its function is as follows. DNA-dependent RNA polymerase catalyzes the transcription of DNA into RNA using the four ribonucleoside triphosphates as substrates. The protein is DNA-directed RNA polymerase subunit beta' of Lawsonia intracellularis (strain PHE/MN1-00).